Consider the following 330-residue polypeptide: Beta-hexosaminidase (330 aa).

Residues Asp62, Arg70, Arg133, and Lys163 to His164 each bind substrate. The Proton donor/acceptor role is filled by His176. Asp246 (nucleophile) is an active-site residue.

This sequence belongs to the glycosyl hydrolase 3 family. NagZ subfamily.

The protein localises to the cytoplasm. The catalysed reaction is Hydrolysis of terminal non-reducing N-acetyl-D-hexosamine residues in N-acetyl-beta-D-hexosaminides.. Its pathway is cell wall biogenesis; peptidoglycan recycling. In terms of biological role, plays a role in peptidoglycan recycling by cleaving the terminal beta-1,4-linked N-acetylglucosamine (GlcNAc) from peptide-linked peptidoglycan fragments, giving rise to free GlcNAc, anhydro-N-acetylmuramic acid and anhydro-N-acetylmuramic acid-linked peptides. The chain is Beta-hexosaminidase from Idiomarina loihiensis (strain ATCC BAA-735 / DSM 15497 / L2-TR).